Consider the following 205-residue polypeptide: Ribosome maturation factor RimP (205 aa).

This sequence belongs to the RimP family.

It localises to the cytoplasm. Required for maturation of 30S ribosomal subunits. This Sinorhizobium fredii (strain NBRC 101917 / NGR234) protein is Ribosome maturation factor RimP.